The primary structure comprises 569 residues: 4-coumarate--CoA ligase 2 (569 aa).

ATP is bound by residues S219, S220, G221, T222, T223, and K227. (E)-4-coumaroyl-AMP is bound by residues F269 and S273. A CoA-binding site is contributed by R290. Residues 292–361 (EMGAMLGAIE…ARLPQAIFGQ (70 aa)) are SBD1. Residues A339, Q361, G362, T366, and M374 each contribute to the (E)-4-coumaroyl-AMP site. ATP-binding residues include Q361, G362, and T366. The interval 362-429 (GYGMTEAGPV…IRGPQIMKGY (68 aa)) is SBD2. Positions 450 and 465 each coordinate ATP. 2 residues coordinate (E)-4-coumaroyl-AMP: K467 and K471. CoA-binding residues include K473 and G474. K556 contacts ATP.

It belongs to the ATP-dependent AMP-binding enzyme family. Mg(2+) serves as cofactor. Expressed in roots, stems, leaf blades, leaf sheaths and spikelets.

It catalyses the reaction (E)-ferulate + ATP + CoA = (E)-feruloyl-CoA + AMP + diphosphate. The catalysed reaction is (E)-4-coumarate + ATP + CoA = (E)-4-coumaroyl-CoA + AMP + diphosphate. The enzyme catalyses (E)-caffeate + ATP + CoA = (E)-caffeoyl-CoA + AMP + diphosphate. It carries out the reaction (E)-cinnamate + ATP + CoA = (E)-cinnamoyl-CoA + AMP + diphosphate. It catalyses the reaction (E)-ferulate + ATP + H(+) = (E)-feruloyl-AMP + diphosphate. The catalysed reaction is (E)-feruloyl-AMP + CoA = (E)-feruloyl-CoA + AMP + H(+). The enzyme catalyses (E)-4-coumarate + ATP + H(+) = (E)-4-coumaroyl-AMP + diphosphate. It carries out the reaction (E)-4-coumaroyl-AMP + CoA = (E)-4-coumaroyl-CoA + AMP + H(+). It catalyses the reaction (E)-caffeate + ATP + H(+) = (E)-caffeoyl-AMP + diphosphate. The catalysed reaction is (E)-caffeoyl-AMP + CoA = (E)-caffeoyl-CoA + AMP + H(+). The protein operates within phytoalexin biosynthesis; 3,4',5-trihydroxystilbene biosynthesis; 3,4',5-trihydroxystilbene from trans-4-coumarate: step 1/2. Its function is as follows. Involved in the phenylpropanoid metabolism by mediating the activation of a number of hydroxycinnamates for the biosynthesis of monolignols and other phenolic secondary metabolites. Catalyzes the formation of CoA esters of cinnamate, 4-coumarate, caffeate and ferulate. Is more efficient with substrates in the following order: ferulate &gt; 4-coumarate &gt; caffeate &gt; cinnamate. Cannot convert sinapate to its corresponding CoA ester. Follows a two-step reaction mechanism, wherein the carboxylate substrate first undergoes adenylation by ATP, followed by a thioesterification in the presence of CoA to yield the final CoA thioester. This is 4-coumarate--CoA ligase 2 from Oryza sativa subsp. japonica (Rice).